We begin with the raw amino-acid sequence, 155 residues long: Small ribosomal subunit protein uS7cz/uS7cy (155 aa).

This sequence belongs to the universal ribosomal protein uS7 family. Part of the 30S ribosomal subunit.

It localises to the plastid. One of the primary rRNA binding proteins, it binds directly to 16S rRNA where it nucleates assembly of the head domain of the 30S subunit. This is Small ribosomal subunit protein uS7cz/uS7cy (rps7-A) from Epifagus virginiana (Beechdrops).